The sequence spans 179 residues: MSLAIIPFITIGWLRCTRKSRDTMSSSPEPQAPMHVTQRQISVFSDEFRQRRRQQMLRFFGATAFTLLSARLAFRGTINRKYVPNMFQLNHRVPLASSQGEALHAFAYGSGLATGGFAMLILGTCWLADVSTVPEFSLRIKALLGESDTQSGRLESAHQDKETRELAAMLDSLLQEKKD.

2 helical membrane passes run 56–78 (MLRF…RGTI) and 105–127 (AFAY…TCWL).

Belongs to the AIM11 family.

The protein resides in the membrane. The sequence is that of Altered inheritance of mitochondria protein 11 (AIM11) from Eremothecium gossypii (strain ATCC 10895 / CBS 109.51 / FGSC 9923 / NRRL Y-1056) (Yeast).